We begin with the raw amino-acid sequence, 453 residues long: Bifunctional protein GlmU (453 aa).

Residues 1–225 (MNIVILAAGT…EWETLGVNSK (225 aa)) form a pyrophosphorylase region. Residues 6 to 9 (LAAG), lysine 20, glutamine 71, 76 to 77 (GT), 98 to 100 (YGD), glycine 135, glutamate 150, asparagine 165, and asparagine 223 each bind UDP-N-acetyl-alpha-D-glucosamine. Aspartate 100 is a Mg(2+) binding site. Asparagine 223 contacts Mg(2+). The segment at 226 to 246 (QQLAELERIHQRNVADALLVA) is linker. The tract at residues 247-453 (GVTLADPARL…GYVRPTKKKS (207 aa)) is N-acetyltransferase. Positions 329 and 347 each coordinate UDP-N-acetyl-alpha-D-glucosamine. The active-site Proton acceptor is the histidine 359. 2 residues coordinate UDP-N-acetyl-alpha-D-glucosamine: tyrosine 362 and asparagine 373. Residues alanine 376, 382–383 (NY), serine 401, and alanine 419 contribute to the acetyl-CoA site.

This sequence in the N-terminal section; belongs to the N-acetylglucosamine-1-phosphate uridyltransferase family. In the C-terminal section; belongs to the transferase hexapeptide repeat family. As to quaternary structure, homotrimer. Mg(2+) serves as cofactor.

It localises to the cytoplasm. It carries out the reaction alpha-D-glucosamine 1-phosphate + acetyl-CoA = N-acetyl-alpha-D-glucosamine 1-phosphate + CoA + H(+). The catalysed reaction is N-acetyl-alpha-D-glucosamine 1-phosphate + UTP + H(+) = UDP-N-acetyl-alpha-D-glucosamine + diphosphate. Its pathway is nucleotide-sugar biosynthesis; UDP-N-acetyl-alpha-D-glucosamine biosynthesis; N-acetyl-alpha-D-glucosamine 1-phosphate from alpha-D-glucosamine 6-phosphate (route II): step 2/2. It functions in the pathway nucleotide-sugar biosynthesis; UDP-N-acetyl-alpha-D-glucosamine biosynthesis; UDP-N-acetyl-alpha-D-glucosamine from N-acetyl-alpha-D-glucosamine 1-phosphate: step 1/1. The protein operates within bacterial outer membrane biogenesis; LPS lipid A biosynthesis. In terms of biological role, catalyzes the last two sequential reactions in the de novo biosynthetic pathway for UDP-N-acetylglucosamine (UDP-GlcNAc). The C-terminal domain catalyzes the transfer of acetyl group from acetyl coenzyme A to glucosamine-1-phosphate (GlcN-1-P) to produce N-acetylglucosamine-1-phosphate (GlcNAc-1-P), which is converted into UDP-GlcNAc by the transfer of uridine 5-monophosphate (from uridine 5-triphosphate), a reaction catalyzed by the N-terminal domain. In Paraburkholderia xenovorans (strain LB400), this protein is Bifunctional protein GlmU.